Consider the following 122-residue polypeptide: Urease subunit beta (122 aa).

Positions 92 to 122 (GLRPEYAGELDGRGHEPTAPNYGEKGQGHFE) are disordered.

Belongs to the urease beta subunit family. In terms of assembly, heterotrimer of UreA (gamma), UreB (beta) and UreC (alpha) subunits. Three heterotrimers associate to form the active enzyme.

The protein resides in the cytoplasm. The catalysed reaction is urea + 2 H2O + H(+) = hydrogencarbonate + 2 NH4(+). Its pathway is nitrogen metabolism; urea degradation; CO(2) and NH(3) from urea (urease route): step 1/1. The chain is Urease subunit beta from Saccharopolyspora erythraea (strain ATCC 11635 / DSM 40517 / JCM 4748 / NBRC 13426 / NCIMB 8594 / NRRL 2338).